The primary structure comprises 170 residues: ATP synthase subunit b (170 aa).

The chain crosses the membrane as a helical span at residues 4 to 24 (ILLLGLALAPVALFASQGAVE).

It belongs to the ATPase B chain family. In terms of assembly, F-type ATPases have 2 components, F(1) - the catalytic core - and F(0) - the membrane proton channel. F(1) has five subunits: alpha(3), beta(3), gamma(1), delta(1), epsilon(1). F(0) has three main subunits: a(1), b(2) and c(10-14). The alpha and beta chains form an alternating ring which encloses part of the gamma chain. F(1) is attached to F(0) by a central stalk formed by the gamma and epsilon chains, while a peripheral stalk is formed by the delta and b chains.

Its subcellular location is the cell inner membrane. Its function is as follows. F(1)F(0) ATP synthase produces ATP from ADP in the presence of a proton or sodium gradient. F-type ATPases consist of two structural domains, F(1) containing the extramembraneous catalytic core and F(0) containing the membrane proton channel, linked together by a central stalk and a peripheral stalk. During catalysis, ATP synthesis in the catalytic domain of F(1) is coupled via a rotary mechanism of the central stalk subunits to proton translocation. Functionally, component of the F(0) channel, it forms part of the peripheral stalk, linking F(1) to F(0). The polypeptide is ATP synthase subunit b (Aliarcobacter butzleri (strain RM4018) (Arcobacter butzleri)).